Reading from the N-terminus, the 352-residue chain is N-acetyl-gamma-glutamyl-phosphate reductase (352 aa).

The protein belongs to the NAGSA dehydrogenase family. Type 1 subfamily.

It localises to the cytoplasm. It catalyses the reaction N-acetyl-L-glutamate 5-semialdehyde + phosphate + NADP(+) = N-acetyl-L-glutamyl 5-phosphate + NADPH + H(+). Its pathway is amino-acid biosynthesis; L-arginine biosynthesis; N(2)-acetyl-L-ornithine from L-glutamate: step 3/4. In terms of biological role, catalyzes the NADPH-dependent reduction of N-acetyl-5-glutamyl phosphate to yield N-acetyl-L-glutamate 5-semialdehyde. The sequence is that of N-acetyl-gamma-glutamyl-phosphate reductase from Nostoc ellipsosporum.